Reading from the N-terminus, the 360-residue chain is DNA replication and repair protein RecF (360 aa).

Residue 30-37 participates in ATP binding; sequence GQNGSGKT.

This sequence belongs to the RecF family.

The protein localises to the cytoplasm. The RecF protein is involved in DNA metabolism; it is required for DNA replication and normal SOS inducibility. RecF binds preferentially to single-stranded, linear DNA. It also seems to bind ATP. The protein is DNA replication and repair protein RecF of Shewanella oneidensis (strain ATCC 700550 / JCM 31522 / CIP 106686 / LMG 19005 / NCIMB 14063 / MR-1).